Consider the following 91-residue polypeptide: Large ribosomal subunit protein bL27 (91 aa).

It belongs to the bacterial ribosomal protein bL27 family.

This is Large ribosomal subunit protein bL27 from Chromobacterium violaceum (strain ATCC 12472 / DSM 30191 / JCM 1249 / CCUG 213 / NBRC 12614 / NCIMB 9131 / NCTC 9757 / MK).